A 341-amino-acid chain; its full sequence is MTLQFRADVDLRPYNTFGMAVRAAHFCQLDDAADLPALLAHPLYRQGPVLWLGGGSNLLLTRDYPGLVVKVALAGIRLLREDGDDMIVEAAAGENWHGFVQHALAQGWYGLENLSLIPGTVGASPVQNIGAYGVEVKDRLLEVVCAQLDRNGEAATLSNAECRFGYRDSVFKHEAAGRLLVTAVRFRLSRRAELRTGYGDIQQQLQADGVDRPTPLDVSRAVVAIRQSKLPDPAVLGNAGSFFKNPVVPAEQAAALLERHPQLPRYPAADGKVKLAAGWLIDQCGLKGYRDGDAGVHDRQALVLVNHGRATGEQMRALARKVQQTVKEKFGVELEPEPLIL.

The FAD-binding PCMH-type domain maps to 19–191 (MAVRAAHFCQ…TAVRFRLSRR (173 aa)). Arg-167 is an active-site residue. Ser-241 serves as the catalytic Proton donor. Glu-337 is a catalytic residue.

This sequence belongs to the MurB family. The cofactor is FAD.

The protein localises to the cytoplasm. The catalysed reaction is UDP-N-acetyl-alpha-D-muramate + NADP(+) = UDP-N-acetyl-3-O-(1-carboxyvinyl)-alpha-D-glucosamine + NADPH + H(+). It functions in the pathway cell wall biogenesis; peptidoglycan biosynthesis. Cell wall formation. This Chromobacterium violaceum (strain ATCC 12472 / DSM 30191 / JCM 1249 / CCUG 213 / NBRC 12614 / NCIMB 9131 / NCTC 9757 / MK) protein is UDP-N-acetylenolpyruvoylglucosamine reductase.